The following is a 114-amino-acid chain: Iron-sulfur cluster insertion protein ErpA (114 aa).

Iron-sulfur cluster contacts are provided by Cys-42, Cys-106, and Cys-108.

This sequence belongs to the HesB/IscA family. Homodimer. It depends on iron-sulfur cluster as a cofactor.

Required for insertion of 4Fe-4S clusters for at least IspG. The sequence is that of Iron-sulfur cluster insertion protein ErpA from Klebsiella pneumoniae (strain 342).